A 671-amino-acid chain; its full sequence is cGMP-dependent protein kinase 1 (671 aa).

N-acetylserine is present on S2. The stretch at 2-59 (SELEEDFAKILMLKEERIKELEKRLSEKEEEIQELKRKLHKCQSVLPVPSTHIGPRTT) forms a coiled coil. The segment at 2-102 (SELEEDFAKI…LIKEAILDND (101 aa)) is required for dimerization. Positions 9-44 (AKILMLKEERIKELEKRLSEKEEEIQELKRKLHKCQ) are leucine-zipper. The segment at 50-75 (PSTHIGPRTTRAQGISAEPQTYRSFH) is autoinhibitory domain. Position 59 is a phosphothreonine; by autocatalysis (T59). The segment at 103 to 220 (FMKNLELSQI…EYMEFLKSVP (118 aa)) is cGMP-binding, high affinity. Residues 167-170 (GELA), 177-178 (RT), R282, 291-294 (GEKA), 301-302 (RT), and Y336 contribute to the 3',5'-cyclic GMP site. The cGMP-binding, low affinity stretch occupies residues 221 to 341 (TFQSLPDEIL…SNKAYEDAEA (121 aa)). One can recognise a Protein kinase domain in the interval 360 to 619 (FNIIDTLGVG…VKDIQKHKWF (260 aa)). Residues 366-374 (LGVGGFGRV) and K390 each bind ATP. The active-site Proton acceptor is D484. Position 515 is a phosphothreonine (T515). In terms of domain architecture, AGC-kinase C-terminal spans 620-671 (EGFNWEGLRKGTLTPPIIPSVASPTDTSNFDSFPEDSDEPPPDDNSGWDIDF). A disordered region spans residues 635-671 (PIIPSVASPTDTSNFDSFPEDSDEPPPDDNSGWDIDF). Positions 652-661 (FPEDSDEPPP) are enriched in acidic residues.

It belongs to the protein kinase superfamily. AGC Ser/Thr protein kinase family. cGMP subfamily. In terms of assembly, isoform alpha: parallel homodimer or heterodimer and also heterotetramer. Interacts directly with PPP1R12A. Non-covalent dimer of dimer of PRKG1-PRKG1 and PPP1R12A-PPP1R12A. This interaction targets PRKG1 to stress fibers to mediate smooth muscle cell relaxation and vasodilation in responses to rises in cGMP. Isoform beta: antiparallel homodimer. Part of cGMP kinase signaling complex at least composed of ACTA2/alpha-actin, CNN1/calponin H1, PLN/phospholamban, PRKG1 and ITPR1. Interacts with IRAG1. Forms a stable complex with ITPR1, IRAG1, and isoform beta of PRKG1. Interacts with TRPC7 (via ankyrin repeat domain). Isoform alpha interacts with RGS2. Interacts with GTF2I. Post-translationally, autophosphorylation increases kinase activity. 65 kDa monomer is produced by proteolytic cleavage. As to expression, detected in cerebellum, hippocampus, dorsomedial hypothalamus, medulla, subcommissural organ, cerebral cortex, amygdala, habenulae, various hypothalamic regions, olfactory bulb, pituitary gland, and retina. Isoform alpha is prominent in the cerebellum and medulla, whereas isoform Beta is predominant in the cortex, hippocampus, hypothalamus, and olfactory bulb.

The protein localises to the cytoplasm. The enzyme catalyses L-seryl-[protein] + ATP = O-phospho-L-seryl-[protein] + ADP + H(+). The catalysed reaction is L-threonyl-[protein] + ATP = O-phospho-L-threonyl-[protein] + ADP + H(+). With respect to regulation, in the absence of cGMP, PRKG1 activity is suppressed by autoinhibitory contacts. Its function is as follows. Serine/threonine protein kinase that acts as a key mediator of the nitric oxide (NO)/cGMP signaling pathway. GMP binding activates PRKG1, which phosphorylates serines and threonines on many cellular proteins. Numerous protein targets for PRKG1 phosphorylation are implicated in modulating cellular calcium, but the contribution of each of these targets may vary substantially among cell types. Proteins that are phosphorylated by PRKG1 regulate platelet activation and adhesion, smooth muscle contraction, cardiac function, gene expression, feedback of the NO-signaling pathway, and other processes involved in several aspects of the CNS like axon guidance, hippocampal and cerebellar learning, circadian rhythm and nociception. Smooth muscle relaxation is mediated through lowering of intracellular free calcium, by desensitization of contractile proteins to calcium, and by decrease in the contractile state of smooth muscle or in platelet activation. Regulates intracellular calcium levels via several pathways: phosphorylates IRAG1 and inhibits IP3-induced Ca(2+) release from intracellular stores, phosphorylation of KCNMA1 (BKCa) channels decreases intracellular Ca(2+) levels, which leads to increased opening of this channel. PRKG1 phosphorylates the canonical transient receptor potential channel (TRPC) family which inactivates the associated inward calcium current. Another mode of action of NO/cGMP/PKGI signaling involves PKGI-mediated inactivation of the Ras homolog gene family member A (RhoA). Phosphorylation of RHOA by PRKG1 blocks the action of this protein in myriad processes: regulation of RHOA translocation; decreasing contraction; controlling vesicle trafficking, reduction of myosin light chain phosphorylation resulting in vasorelaxation. Activation of PRKG1 by NO signaling also alters gene expression in a number of tissues. In smooth muscle cells, increased cGMP and PRKG1 activity influence expression of smooth muscle-specific contractile proteins, levels of proteins in the NO/cGMP signaling pathway, down-regulation of the matrix proteins osteopontin and thrombospondin-1 to limit smooth muscle cell migration and phenotype. Regulates vasodilator-stimulated phosphoprotein (VASP) functions in platelets and smooth muscle. The chain is cGMP-dependent protein kinase 1 (Prkg1) from Mus musculus (Mouse).